The primary structure comprises 382 residues: Lipid-A-disaccharide synthase (382 aa).

Belongs to the LpxB family.

It catalyses the reaction 2-N,3-O-bis[(3R)-3-hydroxytetradecanoyl]-alpha-D-glucosaminyl 1-phosphate + UDP-2-N,3-O-bis[(3R)-3-hydroxytetradecanoyl]-alpha-D-glucosamine = lipid A disaccharide (E. coli) + UDP + H(+). The catalysed reaction is a lipid X + a UDP-2-N,3-O-bis[(3R)-3-hydroxyacyl]-alpha-D-glucosamine = a lipid A disaccharide + UDP + H(+). It functions in the pathway glycolipid biosynthesis; lipid IV(A) biosynthesis; lipid IV(A) from (3R)-3-hydroxytetradecanoyl-[acyl-carrier-protein] and UDP-N-acetyl-alpha-D-glucosamine: step 5/6. Condensation of UDP-2,3-diacylglucosamine and 2,3-diacylglucosamine-1-phosphate to form lipid A disaccharide, a precursor of lipid A, a phosphorylated glycolipid that anchors the lipopolysaccharide to the outer membrane of the cell. This is Lipid-A-disaccharide synthase from Salmonella typhimurium (strain LT2 / SGSC1412 / ATCC 700720).